The sequence spans 290 residues: 33 kDa chaperonin (290 aa).

2 disulfide bridges follow: Cys235–Cys237 and Cys268–Cys271.

The protein belongs to the HSP33 family. In terms of processing, under oxidizing conditions two disulfide bonds are formed involving the reactive cysteines. Under reducing conditions zinc is bound to the reactive cysteines and the protein is inactive.

The protein resides in the cytoplasm. Its function is as follows. Redox regulated molecular chaperone. Protects both thermally unfolding and oxidatively damaged proteins from irreversible aggregation. Plays an important role in the bacterial defense system toward oxidative stress. This is 33 kDa chaperonin from Streptococcus pyogenes serotype M28 (strain MGAS6180).